The sequence spans 213 residues: Kynurenine formamidase (213 aa).

Position 18 (Trp-18) interacts with substrate. Zn(2+)-binding residues include His-48, His-52, and Asp-54. The active-site Proton donor/acceptor is His-58. Zn(2+)-binding residues include His-160 and Glu-172.

This sequence belongs to the Cyclase 1 superfamily. KynB family. In terms of assembly, homodimer. It depends on Zn(2+) as a cofactor.

The catalysed reaction is N-formyl-L-kynurenine + H2O = L-kynurenine + formate + H(+). The protein operates within amino-acid degradation; L-tryptophan degradation via kynurenine pathway; L-kynurenine from L-tryptophan: step 2/2. In terms of biological role, catalyzes the hydrolysis of N-formyl-L-kynurenine to L-kynurenine, the second step in the kynurenine pathway of tryptophan degradation. The protein is Kynurenine formamidase of Burkholderia pseudomallei (strain 1710b).